The chain runs to 88 residues: Acyl-CoA-binding domain-containing protein 7 (88 aa).

Residues 3-88 (LQADFDRAAE…AKELIEKYGI (86 aa)) form the ACB domain. Residues Arg-15, 30-34 (YGLYK), Lys-56, and Tyr-75 contribute to the an acyl-CoA site.

Belongs to the ACBD7 family.

Functionally, binds medium- and long-chain acyl-CoA esters. The polypeptide is Acyl-CoA-binding domain-containing protein 7 (ACBD7) (Homo sapiens (Human)).